A 226-amino-acid chain; its full sequence is Octanoyltransferase (226 aa).

The BPL/LPL catalytic domain occupies 37–220 (GTAGELIWLL…SFSKVFGPVE (184 aa)). Residues 76 to 83 (RGGQFTYH), 151 to 153 (AIG), and 164 to 166 (GIS) contribute to the substrate site. Cysteine 182 serves as the catalytic Acyl-thioester intermediate.

Belongs to the LipB family.

It localises to the cytoplasm. It carries out the reaction octanoyl-[ACP] + L-lysyl-[protein] = N(6)-octanoyl-L-lysyl-[protein] + holo-[ACP] + H(+). Its pathway is protein modification; protein lipoylation via endogenous pathway; protein N(6)-(lipoyl)lysine from octanoyl-[acyl-carrier-protein]: step 1/2. Functionally, catalyzes the transfer of endogenously produced octanoic acid from octanoyl-acyl-carrier-protein onto the lipoyl domains of lipoate-dependent enzymes. Lipoyl-ACP can also act as a substrate although octanoyl-ACP is likely to be the physiological substrate. This chain is Octanoyltransferase, found in Caulobacter vibrioides (strain ATCC 19089 / CIP 103742 / CB 15) (Caulobacter crescentus).